Here is a 137-residue protein sequence, read N- to C-terminus: Large ribosomal subunit protein uL16 (137 aa).

Belongs to the universal ribosomal protein uL16 family. In terms of assembly, part of the 50S ribosomal subunit.

In terms of biological role, binds 23S rRNA and is also seen to make contacts with the A and possibly P site tRNAs. In Psychrobacter sp. (strain PRwf-1), this protein is Large ribosomal subunit protein uL16.